A 527-amino-acid polypeptide reads, in one-letter code: Ribonuclease Y 2 (527 aa).

A helical transmembrane segment spans residues 2–22 (IAMIATAIIGIVAGGGLGWAL). The 94-residue stretch at 339-432 (QYFHCGEVGW…VIAADAVSGA (94 aa)) folds into the HD domain.

The protein belongs to the RNase Y family.

It is found in the cell membrane. Functionally, endoribonuclease that initiates mRNA decay. This chain is Ribonuclease Y 2, found in Bdellovibrio bacteriovorus (strain ATCC 15356 / DSM 50701 / NCIMB 9529 / HD100).